The primary structure comprises 437 residues: 23S rRNA (uracil(1939)-C(5))-methyltransferase RlmD (437 aa).

A TRAM domain is found at 10–68; it reads SAPRNTTFVAEILDLDYQGRGVAKVQGKTWFIENALPQEKVEVRIVDEKRHYGHGISCK. [4Fe-4S] cluster is bound by residues Cys-81, Cys-87, Cys-90, and Cys-167. S-adenosyl-L-methionine-binding residues include Gln-270, Phe-299, Asn-304, Glu-320, Asn-347, and Asp-368. Catalysis depends on Cys-394, which acts as the Nucleophile.

It belongs to the class I-like SAM-binding methyltransferase superfamily. RNA M5U methyltransferase family. RlmD subfamily.

The catalysed reaction is uridine(1939) in 23S rRNA + S-adenosyl-L-methionine = 5-methyluridine(1939) in 23S rRNA + S-adenosyl-L-homocysteine + H(+). Functionally, catalyzes the formation of 5-methyl-uridine at position 1939 (m5U1939) in 23S rRNA. This chain is 23S rRNA (uracil(1939)-C(5))-methyltransferase RlmD, found in Pasteurella multocida (strain Pm70).